We begin with the raw amino-acid sequence, 121 residues long: Protein yippee (121 aa).

A Yippee domain is found at Lys-13 to Glu-110. Positions 17, 20, 73, and 76 each coordinate Zn(2+).

Belongs to the yippee family. In terms of assembly, interacts with hemolin.

This Drosophila melanogaster (Fruit fly) protein is Protein yippee.